The following is a 24-amino-acid chain: Defensin D5 (24 aa).

It belongs to the DEFL family. Group IV subfamily. As to expression, distributed in the epidermal cell layer of leaves and in the subepidermal layer region of stems. Not in roots.

Its subcellular location is the secreted. The protein localises to the cell wall. Functionally, antimicrobial peptide. Active against Fusarium spp., Gram-positive and Gram-negative bacterial pathogens. The polypeptide is Defensin D5 (Spinacia oleracea (Spinach)).